The chain runs to 281 residues: NADPH-dependent 7-cyano-7-deazaguanine reductase (281 aa).

88-90 contributes to the substrate binding site; that stretch reads IES. 90–91 is an NADPH binding site; the sequence is SK. Catalysis depends on Cys189, which acts as the Thioimide intermediate. Asp196 (proton donor) is an active-site residue. A substrate-binding site is contributed by 228-229; it reads HE. Residue 257 to 258 coordinates NADPH; that stretch reads RG.

The protein belongs to the GTP cyclohydrolase I family. QueF type 2 subfamily. In terms of assembly, homodimer.

It localises to the cytoplasm. The enzyme catalyses 7-aminomethyl-7-carbaguanine + 2 NADP(+) = 7-cyano-7-deazaguanine + 2 NADPH + 3 H(+). It participates in tRNA modification; tRNA-queuosine biosynthesis. Catalyzes the NADPH-dependent reduction of 7-cyano-7-deazaguanine (preQ0) to 7-aminomethyl-7-deazaguanine (preQ1). The protein is NADPH-dependent 7-cyano-7-deazaguanine reductase of Yersinia enterocolitica serotype O:8 / biotype 1B (strain NCTC 13174 / 8081).